Here is a 184-residue protein sequence, read N- to C-terminus: Structural protein V8 (184 aa).

A disordered region spans residues 14–35 (IYNKSNTLTNTPSNPTGNTNTL).

It belongs to the sputnik virus V6 family.

It is found in the virion. The sequence is that of Structural protein V8 from Sputnik virophage.